A 276-amino-acid chain; its full sequence is Secreted RxLR effector protein 85 (276 aa).

The signal sequence occupies residues 1–27 (MRYCAFRLGLFFIGYSCCVLLSTPTLA). A RxLR motif is present at residues 110-113 (RQLR).

It belongs to the RxLR effector family.

The protein resides in the secreted. It localises to the host cell membrane. Secreted effector that partially suppresses the host cell death induced by cell death-inducing proteins. The polypeptide is Secreted RxLR effector protein 85 (Plasmopara viticola (Downy mildew of grapevine)).